The sequence spans 348 residues: Uroporphyrinogen decarboxylase (348 aa).

Substrate is bound by residues 27-31 (RQAGR), Phe46, Asp76, Tyr152, Ser207, and His320.

Belongs to the uroporphyrinogen decarboxylase family. As to quaternary structure, homodimer.

It is found in the cytoplasm. It catalyses the reaction uroporphyrinogen III + 4 H(+) = coproporphyrinogen III + 4 CO2. Its pathway is porphyrin-containing compound metabolism; protoporphyrin-IX biosynthesis; coproporphyrinogen-III from 5-aminolevulinate: step 4/4. In terms of biological role, catalyzes the decarboxylation of four acetate groups of uroporphyrinogen-III to yield coproporphyrinogen-III. The chain is Uroporphyrinogen decarboxylase from Bacillus cytotoxicus (strain DSM 22905 / CIP 110041 / 391-98 / NVH 391-98).